The following is a 220-amino-acid chain: CRISPR system Cms endoribonuclease Csm3 (220 aa).

Belongs to the CRISPR-associated Csm3 family. As to quaternary structure, part of the Csm effector complex that includes at least Cas10(1), Csm2(3), Csm3(5), Csm4(1), Csm5(1) and mature crRNA. The Csm complex is elongated and slightly twisted with a maximal length of 215 Angstroms and a diameter of 75-80 Angstroms. It has been modeled to have a central protein filamant of Csm3 subunits along which the dsRNA helix of paired crRNA and target RNA binds. The filament is capped at one end by Cas10 and Csm4 and at the other end by Csm5; ssDNA is thought to bind to the N-terminal HD domain of Cas10. Csm with a precursor crRNA does not include Csm5, while Cas6, the enzyme probably involved in pre-crRNA processing, is found associated with a subset of the Csm complex. A metal cation is required as a cofactor.

Its activity is regulated as follows. Target ssRNase is inhibited by EDTA. Its function is as follows. CRISPR (clustered regularly interspaced short palindromic repeat) is an adaptive immune system that provides protection against mobile genetic elements (viruses, transposable elements and conjugative plasmids). CRISPR clusters contain spacers, sequences complementary to antecedent mobile elements, and target invading nucleic acids. CRISPR clusters are transcribed and processed into CRISPR RNA (crRNA). The type III-A Csm effector complex binds crRNA and acts as a crRNA-guided RNase, DNase and cyclic oligoadenylate synthase; binding of target RNA cognate to the crRNA is required for all activities. In a heterologous host this Csm effector complex restricts ssRNA phage MS2, suggesting it may target RNA viruses in vivo. Csm functions as a non-specific ssDNase. Base-pairing between crRNA and target RNA to form a ternary Csm complex activates a ssDNase activity; target RNA cleavage suppresses the ssDNase, a temporal control that prevents uncontrolled DNA degradation. Viral RNA transcripts probably tether the Csm complex to the viral genome, recruiting Cas10 ssDNA activity which is able to degrade DNA in the transcription bubble, spatially controlling the DNase activity. In terms of biological role, this subunit has the target ssRNA endonuclease activity; it cleaves multiple sites in the target RNA at 6 nucleotide intervals. The number of cleavage sites in the target RNA correlates with the number of Csm3 subunits in the Csm effector complex. In the Csm complex target RNA and ssDNA are cleaved simultaneously, although RNase activity (of Csm3) is much faster. RNA cleavage by Csm3 is not required for ssDNase activity as Csm complex with inactive Csm3 still has ssDNase activity; however as the cleaved target RNA products dissociate away ssDNase activity decreases. This is CRISPR system Cms endoribonuclease Csm3 from Streptococcus thermophilus.